The primary structure comprises 116 residues: Holo-[acyl-carrier-protein] synthase (116 aa).

Mg(2+) contacts are provided by D8 and E50.

This sequence belongs to the P-Pant transferase superfamily. AcpS family. It depends on Mg(2+) as a cofactor.

It is found in the cytoplasm. The enzyme catalyses apo-[ACP] + CoA = holo-[ACP] + adenosine 3',5'-bisphosphate + H(+). Transfers the 4'-phosphopantetheine moiety from coenzyme A to a Ser of acyl-carrier-protein. The chain is Holo-[acyl-carrier-protein] synthase from Beutenbergia cavernae (strain ATCC BAA-8 / DSM 12333 / CCUG 43141 / JCM 11478 / NBRC 16432 / NCIMB 13614 / HKI 0122).